Consider the following 817-residue polypeptide: Actin filament-associated protein 1-like 2 (817 aa).

Position 56 is a phosphotyrosine (Tyr56). The interval 63-164 is disordered; sequence HKQQNAESQD…KGKSAPHQWP (102 aa). Residues 123 to 139 show a composition bias toward acidic residues; the sequence is YYEEAEPYDTSLNEDGE. PH domains lie at 175-271 and 353-447; these read DARI…EVSG and SLET…SESG. Phosphoserine is present on Ser408. Phosphotyrosine is present on Tyr413. Ser484 carries the phosphoserine modification. Positions 512 to 528 are enriched in low complexity; it reads TTAGEAPEEATPATDAP. 2 disordered regions span residues 512–657 and 754–786; these read TTAG…KLGK and GTTV…VNSA. Residues 652-748 are a coiled coil; it reads EIKLGKNRTE…VKDSLRKAEA (97 aa). Residues 754–763 show a composition bias toward polar residues; sequence GTTVDTTHLE. Positions 767-782 are enriched in low complexity; the sequence is PRPKAATPTPAPDCTP.

As to quaternary structure, interacts with SRC. Interacts with LCK when tyrosine phosphorylated. In terms of processing, tyrosine phosphorylated (by SRC).

The protein localises to the cytoplasm. In terms of biological role, may play a role in a signaling cascade by enhancing the kinase activity of SRC. Contributes to SRC-regulated transcription activation. The sequence is that of Actin filament-associated protein 1-like 2 (AFAP1L2) from Bos taurus (Bovine).